Reading from the N-terminus, the 222-residue chain is MEASRVKPGFNGVGMAAGSVNGSSRRPGPGLGYGYGYYMGSGAAAGGSGRAAQAPVDGCSVALRVFVVASTLVSAVVMGVDRQTRTIQITITDALPPLEVPLTANWSYSSAFVYFVVANAMVCLFSAAALAACRSRAAMVPVMVGDLLALALLYSAVGAAAEFGILGERGNSHVRWAKVCNVYGRFCDRAMAAVIVSLIGAFANLVLLMLNILTIHKSSSYY.

Residues 1–59 (MEASRVKPGFNGVGMAAGSVNGSSRRPGPGLGYGYGYYMGSGAAAGGSGRAAQAPVDGC) lie on the Cytoplasmic side of the membrane. Residues 60–80 (SVALRVFVVASTLVSAVVMGV) traverse the membrane as a helical segment. Residues 81–110 (DRQTRTIQITITDALPPLEVPLTANWSYSS) lie on the Extracellular side of the membrane. A glycan (N-linked (GlcNAc...) asparagine) is linked at asparagine 105. The chain crosses the membrane as a helical span at residues 111-131 (AFVYFVVANAMVCLFSAAALA). Over 132–146 (ACRSRAAMVPVMVGD) the chain is Cytoplasmic. Residues 147 to 167 (LLALALLYSAVGAAAEFGILG) form a helical membrane-spanning segment. Over 168 to 189 (ERGNSHVRWAKVCNVYGRFCDR) the chain is Extracellular. A helical membrane pass occupies residues 190 to 210 (AMAAVIVSLIGAFANLVLLML). Over 211–222 (NILTIHKSSSYY) the chain is Cytoplasmic.

It belongs to the Casparian strip membrane proteins (CASP) family. In terms of assembly, homodimer and heterodimers.

Its subcellular location is the cell membrane. This chain is CASP-like protein 1E1, found in Sorghum bicolor (Sorghum).